Reading from the N-terminus, the 480-residue chain is MTLSFTARWRDELPATYTALLPTLLKNARLIWYNDKLAQQLAIPASLFDVTNGAGVWGGETLLPGMSPVAQVYSGHQFGVWAGQLGDGRGILLGEQLLADGSTLDWHLKGAGLTPYSRMGDGRAVLRSTIRESLASEAMHYLGIPTTRALSIVASDTPVQRETQETGAMLMRLAQSHMRFGHFEHFYYRREPEKVQQLADFAIRHYWPQWQDVPEKYVLWFEEVAARTGRLIVEWQTVGFSHGVMNTDNMSILGLTIDYGPFGFLDDYDPGFIGNHSDHQGRYRFDNQPSVALWNLQRLAQTLTPFIEIDALNRALDRYQDALLTHYGQRMRQKLGFFTEQKDDNVLLNELFSLMAREGSDYSRTFRMLSHTEQQSASSPLRDTFIDRAAFDAWFDRYRARLRTEAVDDALRQQQMQRVNPAVVLRNWLAQRAIDAAEQGDMAELHWLHEVLRQPFTDRDDDYASRPPEWGKRLEVSCSS.

8 residues coordinate ATP: Gly86, Gly88, Arg89, Lys109, Asp121, Gly122, Arg172, and Arg179. Asp248 acts as the Proton acceptor in catalysis. Residues Asn249 and Asp258 each contribute to the Mg(2+) site. An ATP-binding site is contributed by Asp258.

This sequence belongs to the SELO family. Requires Mg(2+) as cofactor. The cofactor is Mn(2+).

It catalyses the reaction L-seryl-[protein] + ATP = 3-O-(5'-adenylyl)-L-seryl-[protein] + diphosphate. It carries out the reaction L-threonyl-[protein] + ATP = 3-O-(5'-adenylyl)-L-threonyl-[protein] + diphosphate. The enzyme catalyses L-tyrosyl-[protein] + ATP = O-(5'-adenylyl)-L-tyrosyl-[protein] + diphosphate. The catalysed reaction is L-histidyl-[protein] + UTP = N(tele)-(5'-uridylyl)-L-histidyl-[protein] + diphosphate. It catalyses the reaction L-seryl-[protein] + UTP = O-(5'-uridylyl)-L-seryl-[protein] + diphosphate. It carries out the reaction L-tyrosyl-[protein] + UTP = O-(5'-uridylyl)-L-tyrosyl-[protein] + diphosphate. In terms of biological role, nucleotidyltransferase involved in the post-translational modification of proteins. It can catalyze the addition of adenosine monophosphate (AMP) or uridine monophosphate (UMP) to a protein, resulting in modifications known as AMPylation and UMPylation. The protein is Protein nucleotidyltransferase YdiU of Salmonella paratyphi C (strain RKS4594).